Consider the following 373-residue polypeptide: MFPRRPPATLAAWLAGARGGGLLSALANQCRFVTGLRVRRAQQIAQLYGRLYSESSRCALLGRFWRRLRGRPGHASVLMAALSGVFVWDEERIQEEELQRSINEMKRLEEMSNIFQSSGVENYPPEPKSPAGGNEKSKDKEEPWEMVMDKKHFKLWRRPITGTHLYQYRVFGTYTDVTPRQFFNVQLDTEYRKKWDALVIKLEVIERDAVSGSEVLHWVTHFPYPMYSRDYVYVRRYSVDQENNVMVLVSRAVEHPSVPESPEFVRVRSYESQMVIRPHKSFDENGFDYLLTYSDNPQTVFPRYCVSWMVSSGMPDFLEKLHMATLKAKNMEIKVKDYISAKPLEMSSEAKATAPSPERKNEGSCGPARIEYA.

A mitochondrion-targeting transit peptide spans 1 to 61; that stretch reads MFPRRPPATL…YSESSRCALL (61 aa). The stretch at 89 to 114 forms a coiled coil; sequence DEERIQEEELQRSINEMKRLEEMSNI. The 216-residue stretch at 115-330 folds into the START domain; sequence FQSSGVENYP…LHMATLKAKN (216 aa). Disordered stretches follow at residues 118 to 141 and 347 to 373; these read SGVE…KDKE and SSEA…IEYA.

Post-translationally, proteolytically cleaved by PARL. As to expression, expressed in epithelial cells of airways, peripheral bronchioles and alveoli, as well as in the basal cell layer of the epidermis (at protein level).

Its subcellular location is the mitochondrion. May play a protective role in mucosal tissues by preventing exaggerated allergic responses. In Mus musculus (Mouse), this protein is StAR-related lipid transfer protein 7, mitochondrial (Stard7).